A 1125-amino-acid polypeptide reads, in one-letter code: tRNA (34-2'-O)-methyltransferase regulator WDR6 (1125 aa).

Met1 is subject to N-acetylmethionine. WD repeat units follow at residues 89 to 130 (SKGL…GNVA), 155 to 197 (TDRC…PDNK), 207 to 246 (GHVGVIFSMSYLESKGLLATASEDRSVRIWKVGDLRVPGG), 256 to 294 (GHSARVWQVKLLENYLISAGEDCVCLVWSHEGEILQAFR), 295 to 335 (GHQG…YPGL), 346 to 384 (SRPGALKAVTLAGSWRVLAVTDVGGLYLYDLEVKCWEQL), 433 to 475 (LFQG…TGKA), 489 to 528 (SKQRWHTCSAFLPPGDFLVCGDRRGSVLLFPARPCLFKKP), 567 to 605 (HGKQGVTSVTCHGGYVYSTGRDGSYYQLFVHGGRLQPVL), 611 to 650 (RGMNWIAGLRMAPDGSMVVLGFHANEFVVWSPRSHEKLHI), 652 to 692 (NCGG…IRPN), 725 to 765 (EHPD…GAAH), 767 to 798 (LTAVCNHISSVRALAVWGVGTPGGPQDSHPGL), 860 to 905 (TRYM…RILH), 912 to 958 (HHKR…DRGS), 982 to 1024 (AHSC…PELE), and 1047 to 1085 (AHAAHVTGIKILSPKLMVSASIDQRLTFWRLGNGEPTFM).

It belongs to the WD repeat WDR6 family. As to quaternary structure, interacts with FTSJ1; the interaction is direct, and required for 2'-O-methylation of position 34 in substrate tRNAs. Interacts with IRS4. Interacts with STK11/LKB1. As to expression, expressed in hypothalamus, hippocampus, cerebrum cortex and cerebellum.

Its subcellular location is the cytoplasm. Together with methyltransferase FTSJ1, methylates the 2'-O-ribose of nucleotides at position 34 of the tRNA anticodon loop of substrate tRNAs. Required for the correct positioning of the substrate tRNA for methylation. Required to suppress amino acid starvation-induced autophagy. Enhances the STK11/LKB1-induced cell growth suppression activity. The polypeptide is tRNA (34-2'-O)-methyltransferase regulator WDR6 (Wdr6) (Rattus norvegicus (Rat)).